A 142-amino-acid chain; its full sequence is MANGKYAARKLKQDRQKHRWSDSDYARRARGLGKKSDPLEGAPQGRGIVLEKVGIEAKQPNSAIRKCVRVQLIKNGKQVTAFCPGDGAISFIDEHDEVTIAGIGGAKGRAMGDLSGVNYKVEKVNGVSLIELVRGNAEKPVR.

The disordered stretch occupies residues 1-44 (MANGKYAARKLKQDRQKHRWSDSDYARRARGLGKKSDPLEGAPQ). Residues 11-27 (LKQDRQKHRWSDSDYAR) are compositionally biased toward basic and acidic residues.

It belongs to the universal ribosomal protein uS12 family. As to quaternary structure, part of the 30S ribosomal subunit.

Its function is as follows. With S4 and S5 plays an important role in translational accuracy. Located at the interface of the 30S and 50S subunits. This chain is Small ribosomal subunit protein uS12, found in Natronomonas pharaonis (strain ATCC 35678 / DSM 2160 / CIP 103997 / JCM 8858 / NBRC 14720 / NCIMB 2260 / Gabara) (Halobacterium pharaonis).